The sequence spans 1658 residues: Protein TIC 214 (1658 aa).

6 helical membrane-spanning segments follow: residues 28-48 (FGLY…ILTI), 52-72 (LLGG…GQLI), 82-102 (IYVM…YMLF), 130-150 (IFLD…SPVF), 165-185 (ISFV…FINL), and 199-219 (VNYP…ILAL).

Belongs to the TIC214 family. As to quaternary structure, part of the Tic complex.

Its subcellular location is the plastid. The protein resides in the chloroplast inner membrane. Its function is as follows. Involved in protein precursor import into chloroplasts. May be part of an intermediate translocation complex acting as a protein-conducting channel at the inner envelope. This Huperzia lucidula (Shining clubmoss) protein is Protein TIC 214.